The following is a 135-amino-acid chain: Galectin-1 (135 aa).

N-acetylalanine is present on Ala-2. The region spanning 4–135 (GLVASNLNLK…DFKIKCVAFE (132 aa)) is the Galectin domain. N6-acetyllysine is present on residues Lys-13, Lys-19, and Lys-29. The residue at position 30 (Ser-30) is a Phosphoserine. Residues 45–49 (HFNPR), His-53, Asn-62, and 69–72 (WGTE) each bind a beta-D-galactoside. Residue Lys-108 is modified to N6-acetyllysine; alternate. At Lys-108 the chain carries N6-succinyllysine; alternate. Residue Lys-128 is modified to N6-acetyllysine.

As to quaternary structure, homodimer. Binds LGALS3BP. Interacts with CD2, CD3, CD4, CD6, CD7, CD43, ALCAM and CD45. Interacts with laminin (via poly-N-acetyllactosamine). Interacts with SUSD2. Interacts with cargo receptor TMED10; the interaction mediates the translocation from the cytoplasm into the ERGIC (endoplasmic reticulum-Golgi intermediate compartment) and thereby secretion. Interacts with CD69.

The protein localises to the secreted. The protein resides in the extracellular space. Its subcellular location is the extracellular matrix. It localises to the cytoplasm. Functionally, lectin that binds beta-galactoside and a wide array of complex carbohydrates. Plays a role in regulating apoptosis, cell proliferation and cell differentiation. Inhibits CD45 protein phosphatase activity and therefore the dephosphorylation of Lyn kinase. Strong inducer of T-cell apoptosis. Plays a negative role in Th17 cell differentiation via activation of the receptor CD69. The sequence is that of Galectin-1 (Lgals1) from Rattus norvegicus (Rat).